Here is a 639-residue protein sequence, read N- to C-terminus: Methyl-accepting chemotaxis protein McpS (639 aa).

Residues 1 to 13 (MNSWFANISVNLK) are Cytoplasmic-facing. Residues 14–34 (LGLGFGLVLVLTGLLALTGWT) traverse the membrane as a helical segment. At 35–288 (SLGSLIDRSN…RDIESTQARS (254 aa)) the chain is on the periplasmic side. One can recognise an HBM domain in the interval 41–283 (DRSNWMGDIG…IQLERRDIES (243 aa)). 60 to 65 (RIARLQ) contributes to the (S)-malate binding site. Residue 60–65 (RIARLQ) participates in succinate binding. The acetate site is built by aspartate 138, arginine 183, arginine 187, and tyrosine 236. Positions 191–245 (AENSSANEQAALRQLDAALADTDNLKRQLPSEDARLQQFENAVLAYRDAVRQFRD) form a coiled coil. (S)-malate-binding residues include arginine 254 and threonine 258. Position 254 (arginine 254) interacts with succinate. Residues 289 to 309 (LQAIATLLALLVGVLAAVLIT) traverse the membrane as a helical segment. In terms of domain architecture, HAMP spans 310-362 (RQITRPLQDTLVAVEKIASGDLTQHMRVTRRDELGVLQQGIARMGTTLRELIS). Over 310–639 (RQITRPLQDT…LQTLVSQFRV (330 aa)) the chain is Cytoplasmic. The 237-residue stretch at 367–603 (GVTQIASAAE…EISRSILNVR (237 aa)) folds into the Methyl-accepting transducer domain.

The protein belongs to the methyl-accepting chemotaxis (MCP) protein family. As to quaternary structure, homodimer. Exists as a mixture of monomers and dimers in solution. Ligand binding stabilizes the dimeric form. Methylated by CheR2.

The protein localises to the cell membrane. Its activity is regulated as follows. Binding of citrate to the ligand-binding domain reduces the chemotaxis towards the strong attractants such as malate and succinate. However, in physiologically relevant niches, citrate is mostly complexed with magnesium or calcium ions, and does not bind McpS. In terms of biological role, chemotactic-signal transducers respond to changes in the concentration of attractants and repellents in the environment, transduce a signal from the outside to the inside of the cell, and facilitate sensory adaptation through the variation of the level of methylation. McpS is a specific chemoreceptor for 6 tricarboxylic acid (TCA) cycle intermediates (succinate, fumarate, malate, oxaloacetate, citrate and isocitrate), butyrate and acetate. Malate, succinate, fumarate and oxaloacetate cause the strongest chemotactic response. This is Methyl-accepting chemotaxis protein McpS (mcpS) from Pseudomonas putida (strain ATCC 47054 / DSM 6125 / CFBP 8728 / NCIMB 11950 / KT2440).